Consider the following 175-residue polypeptide: Chromobox protein homolog hpl-2 (175 aa).

In terms of domain architecture, Chromo spans 19 to 78; it reads FMVEKVLDKRTGKAGRDEFLIQWQGFPESDSSWEPRENLQCVEMLDEFEREFSKREKPIR. The tract at residues 71–109 is disordered; the sequence is SKREKPIRKRHSQKPEPSEDQADPEEDKDEKKETNQNDK. The segment covering 88 to 98 has biased composition (acidic residues); sequence SEDQADPEEDK. Over residues 99-109 the composition is skewed to basic and acidic residues; it reads DEKKETNQNDK. The 58-residue stretch at 115 to 172 folds into the Chromo 2; shadow subtype domain; that stretch reads KQLKCIVGLTKGPGELHFLCKFSDDTARLLPAKEVNSRYPSQVIRYYESKLTIQDPKA.

Interacts with histone H3 when di-, or tri-methylated at 'Lys-27' (H3K27me2/me3), or tri-methylated at 'Lys-9' (H3K9me3). Interacts with Tar DNA-binding protein homolog tdp-1; interaction may maintain localization of hpl-2 to gene bodies. Interacts with histone H1 his-24, probably via interaction with hpl-1. Interacts with chromobox protein homolog hpl-1. In terms of assembly, may form homodimers. Interacts (via chromo (shadow subtype) domain) with zinc finger protein lin-13 (via PLVPV motif); the interaction is direct and influences localization of hpl-2 to nuclear foci.

Its subcellular location is the nucleus. It is found in the chromosome. Seems to be involved in transcriptional silencing in heterochromatin-like complexes. Probably does not act as global transcriptional repressor, instead targeting a subset of genes. Involved in RNA processing mediated by Tar DNA-binding protein homolog tdp-1. Plays a role in linking epigenetic regulation with the innate immune response. Involved in the endoplasmic reticulum (ER) stress response via modulation of the unfolded protein response (UPR), acting mainly through the IRE1-XBP1 pathway and perhaps, to a lesser extent, through the autophagy pathway. May act in a common pathway with retinoblastoma-like protein homolog lin-35 and zinc finger protein lin-13 to influence the ER stress response in the intestine. Plays a role in the formation of the vulva and in fertility, acting together with a CoREST-like complex, and chromobox protein homolog hpl-1. Acting in concert with hpl-1 and histone H1 protein his-24, involved in reproduction, somatic gonad development, male tail development and vulval cell fate specification; perhaps as a result of modulating expression of Hox genes mab-5 and egl-5. In vulval cell fate specification may act by repressing transcription, of EGF family gene lin-3 in hypodermal hyp7, and of homeobox lin-39 in vulval precursor cells (VPC). Role in growth and somatic gonad development is antagonized by histone-lysine N-methyltransferase set-2/SET1. Required for larval development, acting redundantly with hpl-1. Plays a role in regulation of the developmentally arrested larval state known as dauer, longevity, and lipid metabolism. The sequence is that of Chromobox protein homolog hpl-2 from Caenorhabditis elegans.